Consider the following 222-residue polypeptide: MKFFIDTANLDEIRAAESLGVLDGVTTNPSLIAKIVEDPASFTRKDFMDHIKRICEIVDGPVNAEVTTLDAASMVREGEELAAIHNNVVVKCPLTIDGLKAIRSLSEKGIRTNATLVFSPNQALLAAKAGAGYVSPFVGRLDDISTDGMALVGQIVEIYDNYGLMTEVIVASIRHPQHVVESALIGADIATIPYSVIRQLANHPLTDAGLKKFMEDAAVIKK.

Lysine 91 functions as the Schiff-base intermediate with substrate in the catalytic mechanism.

The protein belongs to the transaldolase family. Type 3B subfamily.

The protein localises to the cytoplasm. It carries out the reaction D-sedoheptulose 7-phosphate + D-glyceraldehyde 3-phosphate = D-erythrose 4-phosphate + beta-D-fructose 6-phosphate. It participates in carbohydrate degradation; pentose phosphate pathway; D-glyceraldehyde 3-phosphate and beta-D-fructose 6-phosphate from D-ribose 5-phosphate and D-xylulose 5-phosphate (non-oxidative stage): step 2/3. In terms of biological role, transaldolase is important for the balance of metabolites in the pentose-phosphate pathway. This is Probable transaldolase from Chlorobium luteolum (strain DSM 273 / BCRC 81028 / 2530) (Pelodictyon luteolum).